The primary structure comprises 158 residues: 2-C-methyl-D-erythritol 2,4-cyclodiphosphate synthase (158 aa).

Positions 8 and 10 each coordinate a divalent metal cation. 4-CDP-2-C-methyl-D-erythritol 2-phosphate contacts are provided by residues 8-10 (DVH) and 34-35 (HS). Residue His-42 coordinates a divalent metal cation. 4-CDP-2-C-methyl-D-erythritol 2-phosphate is bound by residues 56–58 (DIG), 61–65 (FPDTD), 100–106 (AQAPKMA), 132–135 (TTSE), Phe-139, and Arg-142.

This sequence belongs to the IspF family. As to quaternary structure, homotrimer. The cofactor is a divalent metal cation.

It catalyses the reaction 4-CDP-2-C-methyl-D-erythritol 2-phosphate = 2-C-methyl-D-erythritol 2,4-cyclic diphosphate + CMP. It functions in the pathway isoprenoid biosynthesis; isopentenyl diphosphate biosynthesis via DXP pathway; isopentenyl diphosphate from 1-deoxy-D-xylulose 5-phosphate: step 4/6. Involved in the biosynthesis of isopentenyl diphosphate (IPP) and dimethylallyl diphosphate (DMAPP), two major building blocks of isoprenoid compounds. Catalyzes the conversion of 4-diphosphocytidyl-2-C-methyl-D-erythritol 2-phosphate (CDP-ME2P) to 2-C-methyl-D-erythritol 2,4-cyclodiphosphate (ME-CPP) with a corresponding release of cytidine 5-monophosphate (CMP). The sequence is that of 2-C-methyl-D-erythritol 2,4-cyclodiphosphate synthase from Aliivibrio fischeri (strain ATCC 700601 / ES114) (Vibrio fischeri).